The primary structure comprises 253 residues: Imidazole glycerol phosphate synthase subunit HisF (253 aa).

Catalysis depends on residues aspartate 12 and aspartate 131.

It belongs to the HisA/HisF family. Heterodimer of HisH and HisF.

It is found in the cytoplasm. The catalysed reaction is 5-[(5-phospho-1-deoxy-D-ribulos-1-ylimino)methylamino]-1-(5-phospho-beta-D-ribosyl)imidazole-4-carboxamide + L-glutamine = D-erythro-1-(imidazol-4-yl)glycerol 3-phosphate + 5-amino-1-(5-phospho-beta-D-ribosyl)imidazole-4-carboxamide + L-glutamate + H(+). It participates in amino-acid biosynthesis; L-histidine biosynthesis; L-histidine from 5-phospho-alpha-D-ribose 1-diphosphate: step 5/9. IGPS catalyzes the conversion of PRFAR and glutamine to IGP, AICAR and glutamate. The HisF subunit catalyzes the cyclization activity that produces IGP and AICAR from PRFAR using the ammonia provided by the HisH subunit. The sequence is that of Imidazole glycerol phosphate synthase subunit HisF from Corynebacterium urealyticum (strain ATCC 43042 / DSM 7109).